The sequence spans 108 residues: Large ribosomal subunit protein uL24 (108 aa).

The protein belongs to the universal ribosomal protein uL24 family. Part of the 50S ribosomal subunit.

In terms of biological role, one of two assembly initiator proteins, it binds directly to the 5'-end of the 23S rRNA, where it nucleates assembly of the 50S subunit. One of the proteins that surrounds the polypeptide exit tunnel on the outside of the subunit. This is Large ribosomal subunit protein uL24 from Mycoplasmopsis pulmonis (strain UAB CTIP) (Mycoplasma pulmonis).